The chain runs to 273 residues: R-spondin-3 (273 aa).

A signal peptide spans 1-21; sequence MHLRLISWFFIILNFMEYIGS. FU repeat units lie at residues 35–86 and 92–135; these read PNVS…GYYG and INKC…GLEA. Asn-36 is a glycosylation site (N-linked (GlcNAc...) asparagine). Intrachain disulfides connect Cys-41-Cys-48, Cys-45-Cys-54, Cys-57-Cys-76, Cys-80-Cys-95, Cys-98-Cys-105, Cys-102-Cys-111, Cys-114-Cys-125, Cys-129-Cys-142, Cys-148-Cys-190, Cys-159-Cys-166, and Cys-199-Cys-206. The 61-residue stretch at 147–207 folds into the TSP type-1 domain; it reads HCEASEWSPW…KCTVQRKKCP (61 aa). The segment at 201–273 is disordered; sequence VQRKKCPKGE…QKSVSVSTVH (73 aa). Residues 213–223 show a composition bias toward basic residues; the sequence is RKGRERKRKKP. A compositionally biased stretch (basic and acidic residues) spans 224-252; the sequence is NKEESKDAIPDNKGLEPSRETPEQRENKQ.

The protein belongs to the R-spondin family. As to quaternary structure, interacts with the extracellular domain of FZD8 and LRP6. It however does not form a ternary complex with FZD8 and LRP6. Interacts with WNT1. Binds heparin. Interacts with LGR4, LGR5 and LGR6.

It is found in the secreted. Functionally, activator of the canonical Wnt signaling pathway by acting as a ligand for LGR4-6 receptors, which acts as a key regulator of angiogenesis. Upon binding to LGR4-6 (LGR4, LGR5 or LGR6), LGR4-6 associate with phosphorylated LRP6 and frizzled receptors that are activated by extracellular Wnt receptors, triggering the canonical Wnt signaling pathway to increase expression of target genes. Also regulates the canonical Wnt/beta-catenin-dependent pathway and non-canonical Wnt signaling by acting as an inhibitor of ZNRF3, an important regulator of the Wnt signaling pathway. Acts as a ligand for frizzled FZD8 and LRP6. May negatively regulate the TGF-beta pathway. Acts as a key regulator of angiogenesis by controlling vascular stability and pruning: acts by activating the non-canonical Wnt signaling pathway in endothelial cells. Can also amplify Wnt signaling pathway independently of LGR4-6 receptors, possibly by acting as a direct antagonistic ligand to RNF43 and ZNRF3. This chain is R-spondin-3 (RSPO3), found in Bos taurus (Bovine).